The sequence spans 287 residues: Energy-coupling factor transporter ATP-binding protein EcfA (287 aa).

The region spanning 19 to 252 (FEIQNVSFSY…EEFLASSALD (234 aa)) is the ABC transporter domain. 52–59 (GHNGSGKS) contributes to the ATP binding site.

Belongs to the ABC transporter superfamily. Energy-coupling factor EcfA family. As to quaternary structure, forms a stable energy-coupling factor (ECF) transporter complex composed of 2 membrane-embedded substrate-binding proteins (S component), 2 ATP-binding proteins (A component) and 2 transmembrane proteins (T component).

Its subcellular location is the cell membrane. ATP-binding (A) component of a common energy-coupling factor (ECF) ABC-transporter complex. Unlike classic ABC transporters this ECF transporter provides the energy necessary to transport a number of different substrates. The sequence is that of Energy-coupling factor transporter ATP-binding protein EcfA from Malacoplasma penetrans (strain HF-2) (Mycoplasma penetrans).